Consider the following 227-residue polypeptide: Broad specificity amino-acid racemase RacX (227 aa).

51–53 (DRP) lines the substrate pocket. The active-site Proton donor/acceptor is C82. Residues 83 to 85 (NTA) and K161 each bind substrate. C191 functions as the Proton donor/acceptor in the catalytic mechanism.

It belongs to the aspartate/glutamate racemases family. As to quaternary structure, homodimer.

The catalysed reaction is an L-alpha-amino acid = a D-alpha-amino acid. It carries out the reaction (2S,6S)-2,6-diaminopimelate = meso-2,6-diaminopimelate. The enzyme catalyses L-lysine = D-lysine. It catalyses the reaction L-arginine = D-arginine. The catalysed reaction is L-ornithine = D-ornithine. It carries out the reaction L-histidine = D-histidine. The enzyme catalyses L-alanine = D-alanine. It catalyses the reaction L-tyrosine = D-tyrosine. The catalysed reaction is L-phenylalanine = D-phenylalanine. It carries out the reaction L-serine = D-serine. The enzyme catalyses L-glutamine = D-glutamine. It catalyses the reaction L-methionine = D-methionine. The catalysed reaction is L-asparagine = D-asparagine. It carries out the reaction L-homoserine = D-homoserine. Amino-acid racemase able to utilize a broad range of substrates. Preferentially catalyzes the epimerization of LL-diaminopimelate, as well as the racemization of D-lysine, L-arginine, L-ornithine, L-lysine and D-arginine. Has lower activity against D-ornithine, L-histidine, L-alanine, L-tyrosine, L-phenylalanine, L-serine, L-glutamine, L-methionine, L-asparagine and L-homoserine. Has weak activity against L-norleucine, L-aminobutyric acid and L-norvaline. Has no activity toward nine L-amino acids (Thr, Glu, Asp, Val, Leu, Ile, Trp, Cit and Aad). D-amino acids might be used as components of peptidoglycan and/or be involved in peptidoglycan metabolism and remodeling. The sequence is that of Broad specificity amino-acid racemase RacX (racX) from Bacillus subtilis (strain 168).